A 64-amino-acid chain; its full sequence is Large ribosomal subunit protein bL35 (64 aa).

Belongs to the bacterial ribosomal protein bL35 family.

The chain is Large ribosomal subunit protein bL35 from Shewanella putrefaciens (strain CN-32 / ATCC BAA-453).